Here is a 59-residue protein sequence, read N- to C-terminus: MAKVSIKLTKSVIGTKPNQRKTVEALGLKKIGQVTEKEMTPQLRGMIDVVQHLVEVKEI.

Belongs to the universal ribosomal protein uL30 family. As to quaternary structure, part of the 50S ribosomal subunit.

This chain is Large ribosomal subunit protein uL30, found in Alkaliphilus oremlandii (strain OhILAs) (Clostridium oremlandii (strain OhILAs)).